The sequence spans 533 residues: Glucose-6-phosphate isomerase (533 aa).

The Proton donor role is filled by E341. Catalysis depends on residues H372 and K501.

The protein belongs to the GPI family.

The protein localises to the cytoplasm. It carries out the reaction alpha-D-glucose 6-phosphate = beta-D-fructose 6-phosphate. The protein operates within carbohydrate biosynthesis; gluconeogenesis. Its pathway is carbohydrate degradation; glycolysis; D-glyceraldehyde 3-phosphate and glycerone phosphate from D-glucose: step 2/4. Functionally, catalyzes the reversible isomerization of glucose-6-phosphate to fructose-6-phosphate. The polypeptide is Glucose-6-phosphate isomerase (Cereibacter sphaeroides (strain ATCC 17023 / DSM 158 / JCM 6121 / CCUG 31486 / LMG 2827 / NBRC 12203 / NCIMB 8253 / ATH 2.4.1.) (Rhodobacter sphaeroides)).